The chain runs to 474 residues: Aspartyl/glutamyl-tRNA(Asn/Gln) amidotransferase subunit B (474 aa).

The protein belongs to the GatB/GatE family. GatB subfamily. In terms of assembly, heterotrimer of A, B and C subunits.

The enzyme catalyses L-glutamyl-tRNA(Gln) + L-glutamine + ATP + H2O = L-glutaminyl-tRNA(Gln) + L-glutamate + ADP + phosphate + H(+). It catalyses the reaction L-aspartyl-tRNA(Asn) + L-glutamine + ATP + H2O = L-asparaginyl-tRNA(Asn) + L-glutamate + ADP + phosphate + 2 H(+). In terms of biological role, allows the formation of correctly charged Asn-tRNA(Asn) or Gln-tRNA(Gln) through the transamidation of misacylated Asp-tRNA(Asn) or Glu-tRNA(Gln) in organisms which lack either or both of asparaginyl-tRNA or glutaminyl-tRNA synthetases. The reaction takes place in the presence of glutamine and ATP through an activated phospho-Asp-tRNA(Asn) or phospho-Glu-tRNA(Gln). This chain is Aspartyl/glutamyl-tRNA(Asn/Gln) amidotransferase subunit B, found in Campylobacter curvus (strain 525.92).